A 183-amino-acid chain; its full sequence is Photosystem I assembly protein Ycf4 (183 aa).

The next 2 membrane-spanning stretches (helical) occupy residues 21–43 (YIWGSLMCLGGLGFLTIGISSYL) and 63–85 (LVMCFYGVLGFLLGVYIWLLILW).

Belongs to the Ycf4 family.

The protein localises to the plastid. Its subcellular location is the chloroplast thylakoid membrane. Seems to be required for the assembly of the photosystem I complex. This is Photosystem I assembly protein Ycf4 from Chlorella vulgaris (Green alga).